A 275-amino-acid polypeptide reads, in one-letter code: 4-hydroxy-tetrahydrodipicolinate reductase (275 aa).

Residues 13 to 18 (GAAGKM) and 108 to 110 (GTT) each bind NAD(+). H164 acts as the Proton donor/acceptor in catalysis. Residue H165 coordinates (S)-2,3,4,5-tetrahydrodipicolinate. The Proton donor role is filled by K168. (S)-2,3,4,5-tetrahydrodipicolinate is bound at residue 174–175 (GT).

The protein belongs to the DapB family.

Its subcellular location is the cytoplasm. It carries out the reaction (S)-2,3,4,5-tetrahydrodipicolinate + NAD(+) + H2O = (2S,4S)-4-hydroxy-2,3,4,5-tetrahydrodipicolinate + NADH + H(+). The enzyme catalyses (S)-2,3,4,5-tetrahydrodipicolinate + NADP(+) + H2O = (2S,4S)-4-hydroxy-2,3,4,5-tetrahydrodipicolinate + NADPH + H(+). It functions in the pathway amino-acid biosynthesis; L-lysine biosynthesis via DAP pathway; (S)-tetrahydrodipicolinate from L-aspartate: step 4/4. In terms of biological role, catalyzes the conversion of 4-hydroxy-tetrahydrodipicolinate (HTPA) to tetrahydrodipicolinate. The protein is 4-hydroxy-tetrahydrodipicolinate reductase of Acaryochloris marina (strain MBIC 11017).